A 493-amino-acid polypeptide reads, in one-letter code: Transcript termination protein A18 (493 aa).

Residues 100-256 (MIESKRPLYI…NSIINIAKLS (157 aa)) enclose the Helicase ATP-binding domain. ATP is bound at residue 113 to 120 (LACGFGKT). Positions 206–209 (DESH) match the DESH box motif.

Belongs to the helicase family. Poxviruses subfamily. Interacts with G2. Might be part of a transcription complex composed at least of G2, A18, and H5.

The protein localises to the virion. Functionally, DNA helicase which seems to act as a postreplicative transcription termination factor. Involved in ATP-dependent release of nascent RNA. Forms a stable complex with single-stranded DNA, and to a lesser extent RNA. This Vaccinia virus (strain Tian Tan) (VACV) protein is Transcript termination protein A18.